A 380-amino-acid chain; its full sequence is Gibberellin 20 oxidase 3 (380 aa).

In terms of domain architecture, Fe2OG dioxygenase spans D221 to P321. 3 residues coordinate Fe cation: H246, D248, and H302. R312 is a catalytic residue.

It belongs to the iron/ascorbate-dependent oxidoreductase family. GA20OX subfamily. Fe(2+) serves as cofactor. The cofactor is L-ascorbate. In terms of tissue distribution, expressed at high level in developing siliques. Detected in seeds, roots, leaves and inflorescences. In seeds, specifically detected at the outer layer of the outer integument.

It carries out the reaction gibberellin A12 + 2 2-oxoglutarate + 3 O2 + H(+) = gibberellin A9 + 2 succinate + 3 CO2 + 2 H2O. The catalysed reaction is gibberellin A12 + 3 2-oxoglutarate + 3 O2 = gibberellin A25 + 3 succinate + 3 CO2 + H2O + H(+). The enzyme catalyses gibberellin A53 + 2 2-oxoglutarate + 3 O2 + H(+) = gibberellin A20 + 2 succinate + 3 CO2 + 2 H2O. It participates in plant hormone biosynthesis; gibberellin biosynthesis. Its function is as follows. Key oxidase enzyme in the biosynthesis of gibberellin that catalyzes the conversion of GA12 and GA53 to GA9 and GA20 respectively, via a three-step oxidation at C-20 of the GA skeleton, and GA25 is also formed as a minor product. GA53 is less effectively oxidized than GA12. The chain is Gibberellin 20 oxidase 3 (GA20OX3) from Arabidopsis thaliana (Mouse-ear cress).